Here is a 116-residue protein sequence, read N- to C-terminus: Iron-sulfur cluster assembly protein CyaY (116 aa).

This sequence belongs to the frataxin family.

Functionally, involved in iron-sulfur (Fe-S) cluster assembly. May act as a regulator of Fe-S biogenesis. This is Iron-sulfur cluster assembly protein CyaY from Buchnera aphidicola subsp. Acyrthosiphon pisum (strain APS) (Acyrthosiphon pisum symbiotic bacterium).